Here is a 419-residue protein sequence, read N- to C-terminus: Pregnancy-specific beta-1-glycoprotein 1 (419 aa).

The signal sequence occupies residues 1–34 (MGTLSAPPCTQRIKWKGLLLTASLLNFWNLPTTA). Residues 35 to 144 (QVTIEAEPTK…TGRFTFTLHL (110 aa)) enclose the Ig-like V-type domain. N-linked (GlcNAc...) asparagine glycosylation is found at asparagine 61, asparagine 104, asparagine 111, asparagine 199, asparagine 259, asparagine 268, and asparagine 303. Ig-like C2-type domains lie at 149-234 (PSIS…VTLN), 240-327 (PKPY…VTLN), and 335-410 (PRIY…KSMT). A disulfide bridge connects residues cysteine 169 and cysteine 217. Cystine bridges form between cysteine 262–cysteine 310 and cysteine 354–cysteine 394.

It belongs to the immunoglobulin superfamily. CEA family.

The protein localises to the secreted. The protein is Pregnancy-specific beta-1-glycoprotein 1 (PSG1) of Homo sapiens (Human).